The chain runs to 149 residues: Large ribosomal subunit protein bL9 (149 aa).

This sequence belongs to the bacterial ribosomal protein bL9 family.

Its function is as follows. Binds to the 23S rRNA. This Helicobacter pylori (strain HPAG1) protein is Large ribosomal subunit protein bL9.